A 440-amino-acid polypeptide reads, in one-letter code: 3-phosphoshikimate 1-carboxyvinyltransferase (440 aa).

3-phosphoshikimate-binding residues include lysine 26, serine 27, and arginine 31. Residue lysine 26 coordinates phosphoenolpyruvate. Phosphoenolpyruvate is bound by residues glycine 99 and arginine 127. Positions 172, 174, 320, and 347 each coordinate 3-phosphoshikimate. Glutamine 174 serves as a coordination point for phosphoenolpyruvate. Residue aspartate 320 is the Proton acceptor of the active site. Residues arginine 351 and arginine 392 each contribute to the phosphoenolpyruvate site.

This sequence belongs to the EPSP synthase family. Monomer.

It is found in the cytoplasm. It catalyses the reaction 3-phosphoshikimate + phosphoenolpyruvate = 5-O-(1-carboxyvinyl)-3-phosphoshikimate + phosphate. Its pathway is metabolic intermediate biosynthesis; chorismate biosynthesis; chorismate from D-erythrose 4-phosphate and phosphoenolpyruvate: step 6/7. Its function is as follows. Catalyzes the transfer of the enolpyruvyl moiety of phosphoenolpyruvate (PEP) to the 5-hydroxyl of shikimate-3-phosphate (S3P) to produce enolpyruvyl shikimate-3-phosphate and inorganic phosphate. This chain is 3-phosphoshikimate 1-carboxyvinyltransferase, found in Xanthomonas oryzae pv. oryzae (strain MAFF 311018).